The chain runs to 20 residues: Sperm acrosome membrane-associated protein 3, processed form (20 aa).

Belongs to the glycosyl hydrolase 22 family.

Its function is as follows. Sperm surface membrane protein that may be involved in sperm-egg plasma membrane adhesion and fusion during fertilization. It could be a potential receptor for the egg oligosaccharide residue N-acetylglucosamine, which is present in the extracellular matrix over the egg plasma membrane. The chain is Sperm acrosome membrane-associated protein 3, processed form (SPACA3) from Vulpes vulpes (Red fox).